Reading from the N-terminus, the 490-residue chain is Acetyl-coenzyme A carboxylase carboxyl transferase subunit beta, chloroplastic (490 aa).

Positions 184-203 (LNSSENEGSSRRTRTKGSDL) are disordered. One can recognise a CoA carboxyltransferase N-terminal domain in the interval 221 to 490 (LWVQCENCYG…PLNQKSSKIK (270 aa)). Residues cysteine 225, cysteine 228, cysteine 244, and cysteine 247 each contribute to the Zn(2+) site. A C4-type zinc finger spans residues 225 to 247 (CENCYGLNYKKFLKSKMNICEQC).

It belongs to the AccD/PCCB family. Acetyl-CoA carboxylase is a heterohexamer composed of biotin carboxyl carrier protein, biotin carboxylase and 2 subunits each of ACCase subunit alpha and ACCase plastid-coded subunit beta (accD). Requires Zn(2+) as cofactor.

Its subcellular location is the plastid. It is found in the chloroplast stroma. The enzyme catalyses N(6)-carboxybiotinyl-L-lysyl-[protein] + acetyl-CoA = N(6)-biotinyl-L-lysyl-[protein] + malonyl-CoA. Its pathway is lipid metabolism; malonyl-CoA biosynthesis; malonyl-CoA from acetyl-CoA: step 1/1. Functionally, component of the acetyl coenzyme A carboxylase (ACC) complex. Biotin carboxylase (BC) catalyzes the carboxylation of biotin on its carrier protein (BCCP) and then the CO(2) group is transferred by the transcarboxylase to acetyl-CoA to form malonyl-CoA. This chain is Acetyl-coenzyme A carboxylase carboxyl transferase subunit beta, chloroplastic, found in Solanum bulbocastanum (Wild potato).